The following is a 117-amino-acid chain: MSSSKINPAIQFYEGVDETAIPEIRLTRSKDGKTGQAIFVFQKPDALSEATTGDITGMTLIDDEGALKTREVKARFLNGEPSAIEATYTWKTESDFERFMRFAERYAKKNGLGYSSK.

Belongs to the Psb28 family. In terms of assembly, part of the photosystem II complex.

The protein resides in the cellular thylakoid membrane. The sequence is that of Photosystem II reaction center Psb28 protein from Prochlorococcus marinus (strain MIT 9211).